Reading from the N-terminus, the 165-residue chain is Phosphopantetheine adenylyltransferase (165 aa).

Ser9 is a substrate binding site. Residues 9 to 10 (SF) and His17 contribute to the ATP site. Substrate is bound by residues Lys41, Ile75, and Arg89. Residues 90-92 (GVR), Glu100, and 125-131 (YLFVRSD) contribute to the ATP site.

This sequence belongs to the bacterial CoaD family. As to quaternary structure, homohexamer. It depends on Mg(2+) as a cofactor.

The protein localises to the cytoplasm. It catalyses the reaction (R)-4'-phosphopantetheine + ATP + H(+) = 3'-dephospho-CoA + diphosphate. Its pathway is cofactor biosynthesis; coenzyme A biosynthesis; CoA from (R)-pantothenate: step 4/5. Functionally, reversibly transfers an adenylyl group from ATP to 4'-phosphopantetheine, yielding dephospho-CoA (dPCoA) and pyrophosphate. This chain is Phosphopantetheine adenylyltransferase, found in Borrelia hermsii (strain HS1 / DAH).